Here is a 248-residue protein sequence, read N- to C-terminus: 1-(5-phosphoribosyl)-5-[(5-phosphoribosylamino)methylideneamino] imidazole-4-carboxamide isomerase (248 aa).

Catalysis depends on Asp-17, which acts as the Proton acceptor. Asp-136 functions as the Proton donor in the catalytic mechanism.

This sequence belongs to the HisA/HisF family.

It is found in the cytoplasm. The enzyme catalyses 1-(5-phospho-beta-D-ribosyl)-5-[(5-phospho-beta-D-ribosylamino)methylideneamino]imidazole-4-carboxamide = 5-[(5-phospho-1-deoxy-D-ribulos-1-ylimino)methylamino]-1-(5-phospho-beta-D-ribosyl)imidazole-4-carboxamide. Its pathway is amino-acid biosynthesis; L-histidine biosynthesis; L-histidine from 5-phospho-alpha-D-ribose 1-diphosphate: step 4/9. This chain is 1-(5-phosphoribosyl)-5-[(5-phosphoribosylamino)methylideneamino] imidazole-4-carboxamide isomerase, found in Arthrobacter sp. (strain FB24).